The following is a 141-amino-acid chain: Nucleoside diphosphate kinase (141 aa).

ATP-binding residues include K11, F59, R87, T93, R104, and N114. H117 functions as the Pros-phosphohistidine intermediate in the catalytic mechanism.

It belongs to the NDK family. Homotetramer. The cofactor is Mg(2+).

It localises to the cytoplasm. It catalyses the reaction a 2'-deoxyribonucleoside 5'-diphosphate + ATP = a 2'-deoxyribonucleoside 5'-triphosphate + ADP. It carries out the reaction a ribonucleoside 5'-diphosphate + ATP = a ribonucleoside 5'-triphosphate + ADP. Major role in the synthesis of nucleoside triphosphates other than ATP. The ATP gamma phosphate is transferred to the NDP beta phosphate via a ping-pong mechanism, using a phosphorylated active-site intermediate. The protein is Nucleoside diphosphate kinase of Bordetella bronchiseptica (strain ATCC BAA-588 / NCTC 13252 / RB50) (Alcaligenes bronchisepticus).